A 339-amino-acid polypeptide reads, in one-letter code: Methylthioribose-1-phosphate isomerase (339 aa).

Substrate-binding positions include 52 to 54, arginine 89, and glutamine 188; that span reads RGA. The Proton donor role is filled by aspartate 229. 239-240 is a substrate binding site; sequence NK.

Belongs to the eIF-2B alpha/beta/delta subunits family. MtnA subfamily.

The catalysed reaction is 5-(methylsulfanyl)-alpha-D-ribose 1-phosphate = 5-(methylsulfanyl)-D-ribulose 1-phosphate. The protein operates within amino-acid biosynthesis; L-methionine biosynthesis via salvage pathway; L-methionine from S-methyl-5-thio-alpha-D-ribose 1-phosphate: step 1/6. In terms of biological role, catalyzes the interconversion of methylthioribose-1-phosphate (MTR-1-P) into methylthioribulose-1-phosphate (MTRu-1-P). This chain is Methylthioribose-1-phosphate isomerase, found in Anaeromyxobacter sp. (strain K).